The chain runs to 498 residues: ATP synthase subunit beta, chloroplastic (498 aa).

172-179 (GGAGVGKT) lines the ATP pocket.

This sequence belongs to the ATPase alpha/beta chains family. F-type ATPases have 2 components, CF(1) - the catalytic core - and CF(0) - the membrane proton channel. CF(1) has five subunits: alpha(3), beta(3), gamma(1), delta(1), epsilon(1). CF(0) has four main subunits: a(1), b(1), b'(1) and c(9-12).

It is found in the plastid. The protein resides in the chloroplast thylakoid membrane. It carries out the reaction ATP + H2O + 4 H(+)(in) = ADP + phosphate + 5 H(+)(out). In terms of biological role, produces ATP from ADP in the presence of a proton gradient across the membrane. The catalytic sites are hosted primarily by the beta subunits. In Nicotiana tabacum (Common tobacco), this protein is ATP synthase subunit beta, chloroplastic.